Consider the following 435-residue polypeptide: 3-ketoacyl-CoA thiolase (435 aa).

Catalysis depends on cysteine 98, which acts as the Acyl-thioester intermediate. Residues histidine 391 and cysteine 421 each act as proton acceptor in the active site.

Belongs to the thiolase-like superfamily. Thiolase family. In terms of assembly, heterotetramer of two alpha chains (FadJ) and two beta chains (FadI).

The protein resides in the cytoplasm. It carries out the reaction an acyl-CoA + acetyl-CoA = a 3-oxoacyl-CoA + CoA. It participates in lipid metabolism; fatty acid beta-oxidation. In terms of biological role, catalyzes the final step of fatty acid oxidation in which acetyl-CoA is released and the CoA ester of a fatty acid two carbons shorter is formed. The sequence is that of 3-ketoacyl-CoA thiolase from Vibrio cholerae serotype O1 (strain ATCC 39315 / El Tor Inaba N16961).